The following is a 312-amino-acid chain: Ribosomal RNA small subunit methyltransferase H (312 aa).

S-adenosyl-L-methionine-binding positions include 34–36 (GGH), Asp54, Phe78, Asp100, and Gln107.

This sequence belongs to the methyltransferase superfamily. RsmH family.

It is found in the cytoplasm. The enzyme catalyses cytidine(1402) in 16S rRNA + S-adenosyl-L-methionine = N(4)-methylcytidine(1402) in 16S rRNA + S-adenosyl-L-homocysteine + H(+). Functionally, specifically methylates the N4 position of cytidine in position 1402 (C1402) of 16S rRNA. The chain is Ribosomal RNA small subunit methyltransferase H from Salmonella choleraesuis (strain SC-B67).